A 39-amino-acid chain; its full sequence is Phospholipase A2 (39 aa).

Ca(2+) is bound by residues tryptophan 10, glycine 12, and glycine 14. Cysteine 11 and cysteine 33 are joined by a disulfide. The active site involves histidine 36. Aspartate 37 lines the Ca(2+) pocket.

Ca(2+) serves as cofactor. Expressed uniformly in tentacles (at protein level).

The protein localises to the secreted. It localises to the nematocyst. The enzyme catalyses a 1,2-diacyl-sn-glycero-3-phosphocholine + H2O = a 1-acyl-sn-glycero-3-phosphocholine + a fatty acid + H(+). Inhibited by morin and p-BPB. PA2 catalyzes the calcium-dependent hydrolysis of the 2-acyl groups in 3-sn-phosphoglycerides. Induces insulin secretion in isolated rat islets under high glucose concentration conditions, but not under low glucose concentration conditions. Increases perfusion pressure, renal vascular resistance, urinary flow, glomerular filtration rate, and potassium, sodium, and chloride excretion levels in rat kidney. Does not increase perfusion pressure in the rat mesenteric vascular bed. In Bunodosoma caissarum (Sea anemone), this protein is Phospholipase A2.